The chain runs to 234 residues: Probable transcriptional regulatory protein PSPPH_2212 (234 aa).

It belongs to the TACO1 family.

It is found in the cytoplasm. This Pseudomonas savastanoi pv. phaseolicola (strain 1448A / Race 6) (Pseudomonas syringae pv. phaseolicola (strain 1448A / Race 6)) protein is Probable transcriptional regulatory protein PSPPH_2212.